We begin with the raw amino-acid sequence, 596 residues long: Inactive metallocarboxypeptidase ecm14 (596 aa).

The signal sequence occupies residues 1-26 (MSQSHSILSSLILLVAIIFCVPHVIA). Positions 27–190 (VPWTTDGHAQ…SYPSMAYADA (164 aa)) are excised as a propeptide. The N-linked (GlcNAc...) asparagine glycan is linked to Asn114. One can recognise a Peptidase M14 domain in the interval 220–540 (NYQPLSVIIP…NVIKYFGDFL (321 aa)). Zn(2+) contacts are provided by His285 and Glu288. Substrate contacts are provided by residues 285-288 (HARE), Arg343, and 360-361 (DR). Residues Cys354 and Cys376 are joined by a disulfide bond. Asn400 carries an N-linked (GlcNAc...) asparagine glycan. His416 is a binding site for Zn(2+). A substrate-binding site is contributed by 417 to 418 (SY).

The protein belongs to the peptidase M14 family. Zn(2+) is required as a cofactor.

It localises to the vacuole. Its subcellular location is the secreted. Its function is as follows. Inactive carboxypeptidase that may play a role in cell wall organization and biogenesis. This Sclerotinia sclerotiorum (strain ATCC 18683 / 1980 / Ss-1) (White mold) protein is Inactive metallocarboxypeptidase ecm14 (ecm14).